Consider the following 364-residue polypeptide: Chaperone protein DnaJ (364 aa).

Residues 5–71 (DYYEILGVAK…QKRQAYDQFG (67 aa)) enclose the J domain. The CR-type zinc finger occupies 127 to 205 (GSTVKIRIPK…CRGQGLVRKQ (79 aa)). Zn(2+)-binding residues include cysteine 140, cysteine 143, cysteine 157, cysteine 160, cysteine 179, cysteine 182, cysteine 193, and cysteine 196. CXXCXGXG motif repeat units lie at residues 140–147 (CDTCSGIG), 157–164 (CSICSGVG), 179–186 (CGTCSGTG), and 193–200 (CGTCRGQG).

It belongs to the DnaJ family. Homodimer. Requires Zn(2+) as cofactor.

It localises to the cytoplasm. In terms of biological role, participates actively in the response to hyperosmotic and heat shock by preventing the aggregation of stress-denatured proteins and by disaggregating proteins, also in an autonomous, DnaK-independent fashion. Unfolded proteins bind initially to DnaJ; upon interaction with the DnaJ-bound protein, DnaK hydrolyzes its bound ATP, resulting in the formation of a stable complex. GrpE releases ADP from DnaK; ATP binding to DnaK triggers the release of the substrate protein, thus completing the reaction cycle. Several rounds of ATP-dependent interactions between DnaJ, DnaK and GrpE are required for fully efficient folding. Also involved, together with DnaK and GrpE, in the DNA replication of plasmids through activation of initiation proteins. This Ruthia magnifica subsp. Calyptogena magnifica protein is Chaperone protein DnaJ.